We begin with the raw amino-acid sequence, 225 residues long: NAD(P)H-quinone oxidoreductase subunit K, chloroplastic (225 aa).

C43, C44, C108, and C139 together coordinate [4Fe-4S] cluster.

The protein belongs to the complex I 20 kDa subunit family. As to quaternary structure, NDH is composed of at least 16 different subunits, 5 of which are encoded in the nucleus. It depends on [4Fe-4S] cluster as a cofactor.

Its subcellular location is the plastid. It localises to the chloroplast thylakoid membrane. It catalyses the reaction a plastoquinone + NADH + (n+1) H(+)(in) = a plastoquinol + NAD(+) + n H(+)(out). It carries out the reaction a plastoquinone + NADPH + (n+1) H(+)(in) = a plastoquinol + NADP(+) + n H(+)(out). NDH shuttles electrons from NAD(P)H:plastoquinone, via FMN and iron-sulfur (Fe-S) centers, to quinones in the photosynthetic chain and possibly in a chloroplast respiratory chain. The immediate electron acceptor for the enzyme in this species is believed to be plastoquinone. Couples the redox reaction to proton translocation, and thus conserves the redox energy in a proton gradient. The protein is NAD(P)H-quinone oxidoreductase subunit K, chloroplastic of Nymphaea alba (White water-lily).